A 5193-amino-acid chain; its full sequence is Usherin (5193 aa).

The N-terminal stretch at 1–34 (MHYLALSPGFLCYTIKTLILAYLASVLVLAASQG) is a signal peptide. At 35 to 5033 (VFPRLENVGA…KSTEFYSELW (4999 aa)) the chain is on the extracellular side. 7 N-linked (GlcNAc...) asparagine glycosylation sites follow: N230, N258, N274, N358, N415, N448, and N469. The 247-residue stretch at 268–514 (QDFRLYNVSL…AVDEIIVSGR (247 aa)) folds into the Laminin N-terminal domain. 24 disulfide bridges follow: C515–C524, C517–C533, C535–C546, C549–C569, C572–C581, C574–C602, C605–C614, C617–C635, C638–C652, C640–C659, C661–C670, C673–C688, C691–C705, C693–C712, C714–C723, C726–C741, C744–C756, C746–C763, C765–C774, C777–C789, C792–C805, C794–C812, C814–C823, and C826–C846. Laminin EGF-like domains lie at 515-571 (CQCH…NCKP), 572-637 (CQCH…ACKL), 638-690 (CDCN…GCRP), 691-743 (CNCN…GCEP), 744-791 (CQCN…ACEV), 792-848 (CDCS…NCEK), 853-896 (NGSL…GCQA), 897-947 (CDCD…GCLP), 948-998 (CLCH…RCRP), and 999-1049 (CHCH…GCSK). N647 carries an N-linked (GlcNAc...) asparagine glycan. N836 and N853 each carry an N-linked (GlcNAc...) asparagine glycan. 14 disulfides stabilise this stretch: C867/C876, C879/C894, C897/C910, C899/C917, C919/C928, C931/C945, C948/C960, C950/C967, C969/C979, C982/C996, C999/C1011, C1001/C1018, C1020/C1029, and C1032/C1047. Residue N885 is glycosylated (N-linked (GlcNAc...) asparagine). A glycan (N-linked (GlcNAc...) asparagine) is linked at N941. N1008 carries an N-linked (GlcNAc...) asparagine glycan. 5 consecutive Fibronectin type-III domains span residues 1055–1143 (PPPR…TKPE), 1147–1241 (GHLN…APPQ), 1242–1357 (TQGP…SVPV), 1358–1462 (FMAP…AAPA), and 1463–1566 (QLRP…LQLK). 5 N-linked (GlcNAc...) asparagine glycosylation sites follow: N1068, N1089, N1150, N1171, and N1222. Residues N1382, N1473, and N1626 are each glycosylated (N-linked (GlcNAc...) asparagine). Laminin G-like domains are found at residues 1511-1700 (TKGT…WEGC) and 1705-1882 (EEGV…QDGC). Cysteines 1663 and 1700 form a disulfide. N1770 carries an N-linked (GlcNAc...) asparagine glycan. 13 Fibronectin type-III domains span residues 1847–1946 (EPGF…TAPQ), 1948–2045 (VPTP…TPQE), 2046–2132 (APQE…TAQL), 2133–2234 (PPEQ…IPEG), 2235–2321 (VPAP…APPE), 2322–2421 (GVVN…SVEM), 2422–2525 (PPGA…DKPG), 2526–2613 (PIDA…TLPG), 2617–2713 (GIPS…TRPC), 2717–2810 (GVQP…THPA), 2811–2914 (PPQE…TLAG), 2918–3009 (RGAT…MWEE), and 3013–3103 (GMLP…TPSD). Cysteines 1853 and 1882 form a disulfide. N1894 carries an N-linked (GlcNAc...) asparagine glycan. The disordered stretch occupies residues 1931 to 1955 (VSSDWSRGRTLGTAPQSVPTPSRAQ). Positions 1943-1955 (TAPQSVPTPSRAQ) are enriched in polar residues. 10 N-linked (GlcNAc...) asparagine glycosylation sites follow: N1958, N2095, N2121, N2177, N2186, N2249, N2276, N2313, N2368, and N2404. Residues N2575, N2647, N2701, N2761, and N2779 are each glycosylated (N-linked (GlcNAc...) asparagine). N-linked (GlcNAc...) asparagine glycosylation is found at N2928, N2998, N3023, N3090, N3208, N3322, and N3411. Fibronectin type-III domains lie at 3395–3489 (CPAT…TRED), 3490–3580 (VPEG…TTQR), 3581–3671 (SPEN…TLQA), 3672–3766 (APQG…TPED), 3769–3857 (PPCN…TLEA), 3858–3955 (APVG…TLEA), 3956–4059 (PPRG…SAPS), 4060–4148 (GLMN…APPD), 4149–4256 (TQMA…APPD), 4257–4346 (GLSP…TPEV), 4347–4437 (PPSE…APPE), 4438–4522 (NMDP…TSPS), 4523–4625 (APSG…VPPL), 4628–4725 (PAPH…TGPA), 4726–4818 (PPEG…THPA), 4819–4921 (PPSG…TKKE), and 4922–5005 (MPQY…YDAA). 6 N-linked (GlcNAc...) asparagine glycosylation sites follow: N3589, N3645, N3686, N3712, N3723, and N3772. N3976, N4063, N4194, N4218, N4304, N4340, N4365, and N4410 each carry an N-linked (GlcNAc...) asparagine glycan. N4556, N4575, N4683, N4716, N4746, N4756, N4765, N4915, and N4934 each carry an N-linked (GlcNAc...) asparagine glycan. Residues 5034–5054 (FIMVMAVVGLILLAIFLSLIL) form a helical membrane-spanning segment. Residues 5055–5193 (QRKIHKEPCI…EHTAFTDTHL (139 aa)) lie on the Cytoplasmic side of the membrane. Residues 5191–5193 (THL) carry the PDZ-binding motif.

Interacts with collagen IV and fibronectin via its laminin EGF-like domains. Interaction with collagen may be required for stable integration into the basement membrane. Interacts with NINL. Interacts with USH1C. Component of USH2 complex, composed of ADGRV1, PDZD7, USH2A and WHRN. Interacts with ADGRV1/MASS1 (via N-terminal PDZ domain). Interacts (via the cytoplasmic region) with WHRN. Interacts (via the cytoplasmic region) with PDZD7. Interacts (via the cytoplasmic region) with VEZT and MYO7A (via MyTH4-FERM domains); the interaction associates VEZT with the USH2 complex at the stereocilia base. In terms of tissue distribution, present in the testis, epididymis, oviduct, spleen, submaxillary gland, and small and large intestines. Not detected in the brain, skin, lung, skeletal muscle, cardiac muscle, liver or kidney. Expressed in smooth muscle of the colon and the epididymis. Also present in select vascular basement membranes. In the cochlea, it is present in virtually every basement membrane. It is particularly high in the strial capillary basement membranes (SCBMs). In the retina, it is again expressed in all of the basement membranes. It is also very prevalent in the lens capsule and the Bruch's layer between the retinal pigment epithelium and the choroid layer, which is very rich in basement membranes. In neonates in it is widely expressed in the basement membranes of the cochlea. Present in the synaptic terminals of retinal photoreceptors (at protein level).

The protein localises to the cell projection. Its subcellular location is the stereocilium membrane. The protein resides in the photoreceptor inner segment. It is found in the secreted. Involved in hearing and vision as member of the USH2 complex. In the inner ear, required for the maintenance of hair bundle ankle formation, which connects growing stereocilia in developing cochlear hair cells. In retina photoreceptors, the USH2 complex is required for the maintenance of periciliary membrane complex that seems to play a role in regulating intracellular protein transport. This chain is Usherin (Ush2A), found in Mus musculus (Mouse).